A 33-amino-acid polypeptide reads, in one-letter code: Maurocalcin (33 aa).

Cystine bridges form between Cys3–Cys17, Cys10–Cys21, and Cys16–Cys32. Positions 22–24 (KRR) are essential for stimulation of [3H]ryanodine binding to RYR.

It belongs to the scorpion calcin family. Post-translationally, the non-natural D-maurocalcin (a chiral analog of maurocalcin composed of D-amino acids) completely loses the ability to stimulate [3H]ryanodine binding and calcium release. Its protease resistance, combined with its efficient cell penetration at concentrations devoid of cell toxicity, suggests that it should be an excellent vector for in vivo applications. As to expression, expressed by the venom gland.

Its subcellular location is the secreted. Functionally, this toxin stabilizes ryanodine receptor 1 (RyR1) opening in a long-lasting subconductance state (48%-60% of the full conductance state). Furthermore, it triggers calcium release from sarcoplasmic vesicles (6.6 nM are enough to induce a sharp release, and 60% of the total calcium is released after toxin (100 nM) addition) probably by acting as a cell-penetrating peptide (CPP). In addition, it has been shown to dose-dependently stimulate ryanodine binding to RyR1 (EC(50)=12.5-26.4 nM). It also augments the bell-shaped calcium-[3H]ryanodine binding curve that is maximal at about 10 uM calcium concentration. It binds a different site as ryanodine. It acts synergistically with caffeine. In vivo, intracerebroventricular injection into mice causes death. This chain is Maurocalcin, found in Scorpio palmatus (Israeli golden scorpion).